The sequence spans 223 residues: MSAKIGVITFPGTLDDVDAARAARIAGAEVISLWHADEDLKGVDAVVVPGGFSYGDYLRTGAISALAPVMQSVIEQAGKGMPVLGICNGFQILTEARLLPGALTRNKGLHFHCVDAHLVVENNTTAWTNTLEKGQQILIPAKHGEGRFQADAETIAQLEGEGRVVFRYTDNFNGSVNDIAGITNETGRIVGLMPHPEHAVEKLTGPSIDGLELFLSAVGTIAA.

A Glutamine amidotransferase type-1 domain is found at 4–223 (KIGVITFPGT…FLSAVGTIAA (220 aa)). Catalysis depends on Cys-87, which acts as the Nucleophile. Catalysis depends on residues His-195 and Glu-197.

In terms of assembly, part of the FGAM synthase complex composed of 1 PurL, 1 PurQ and 2 PurS subunits.

The protein resides in the cytoplasm. The enzyme catalyses N(2)-formyl-N(1)-(5-phospho-beta-D-ribosyl)glycinamide + L-glutamine + ATP + H2O = 2-formamido-N(1)-(5-O-phospho-beta-D-ribosyl)acetamidine + L-glutamate + ADP + phosphate + H(+). It catalyses the reaction L-glutamine + H2O = L-glutamate + NH4(+). It participates in purine metabolism; IMP biosynthesis via de novo pathway; 5-amino-1-(5-phospho-D-ribosyl)imidazole from N(2)-formyl-N(1)-(5-phospho-D-ribosyl)glycinamide: step 1/2. Functionally, part of the phosphoribosylformylglycinamidine synthase complex involved in the purines biosynthetic pathway. Catalyzes the ATP-dependent conversion of formylglycinamide ribonucleotide (FGAR) and glutamine to yield formylglycinamidine ribonucleotide (FGAM) and glutamate. The FGAM synthase complex is composed of three subunits. PurQ produces an ammonia molecule by converting glutamine to glutamate. PurL transfers the ammonia molecule to FGAR to form FGAM in an ATP-dependent manner. PurS interacts with PurQ and PurL and is thought to assist in the transfer of the ammonia molecule from PurQ to PurL. In Corynebacterium glutamicum (strain ATCC 13032 / DSM 20300 / JCM 1318 / BCRC 11384 / CCUG 27702 / LMG 3730 / NBRC 12168 / NCIMB 10025 / NRRL B-2784 / 534), this protein is Phosphoribosylformylglycinamidine synthase subunit PurQ.